The chain runs to 486 residues: MTIESCPGGRVGEDGITNPSNIRVLVVGVGIGGLAAAIECHRKGHSVILVDKIAQVDPLAGDGIGIGTNGARIIAKWGGGRVHDQILSHRCDTRKIEILNRQGESFGQHELKGYGRDHGYMLNRGQLVSILFDYAGTLGIDKRLGSPVTEYRETEMGAAVVLEGGEVIEADCVICSDGVHGAGRKFVTSLDPVSRESGWAMSRAYLRKEDLKPHRDRDVRILDGTDKQDRMMVWFDHGIQVSMWTVKHGEELVWIVTHKVSVDLSLLPPPTLGTKDARDTWTMEGSESMIEDTISQIHDWPSRNMIEPILRSTPPKRLLNQKIITREPLDRWVSPHGRMIIIGDAAHPYPPISGQGGSQAIEDAAVVAIALQLAGKDHVPLALRIAEKIRSVTSHYLMLQGHHMLKSTGSHPRATAIQTEASHLYELMFKPDWGVVAKNPSILAPPCPKWLFQHDSQAYVYAEFGKIAEAMADGREYVIANTPPSA.

FAD contacts are provided by Asp-51, Gly-65, and Arg-124. The active site involves Arg-203. 2 residues coordinate FAD: Asp-344 and Gly-357.

The protein belongs to the paxM FAD-dependent monooxygenase family. FAD serves as cofactor.

It functions in the pathway secondary metabolite biosynthesis. In terms of biological role, flavin-dependent monooxygenase; part of the gene cluster that mediates the biosynthesis of protubonine B, a hydroxylated and diacetylated cyclo-L-Trp-L-Leu derivative. Within the pathway, pboD catalyzes the hydroxylation at C-3 of the indole ring of cyclo-L-Trp-L-Leu and subsequent formation of the pyrrolidine ring, eading to the production of protubonine D. PboD is also able to accept other cyclodipeptides (CDPs) as substrates, including cyclo-L-Trp-L-Trp, cyclo-L-Trp-L-Tyr, cyclo-L-Trp-L-Phe, cyclo-L-Trp-L-Met, cyclo-L-Trp-L-Ala, cyclo-L-Trp-L-Pro and cyclo-L-Trp-Gly. Assays with cyclo-L-Trp-L-Trp, cyclo-L-Trp-L-Tyr, cyclo-L-Trp-L-Phe show similar or even slightly higher conversion yields, compared with that of the natural substrate cyclo-L-Trp-L-Leu, whereas cyclo-L-Trp-L-Pro and cyclo-L-Trp-Gly are accepted by PboD but only with conversion yields of 10 and 4%, respectively. Cyclo-L-Trp-L-His is not accepted as a substrate. The first step of the protubonine B synthesis is performed by the nonribosomal peptide synthetase pboA that catalyzes the formation of cyclo-L-Trp-L-Leu by condensing L-Leu with L-Trp. The flavin-dependent monooxygenase pboD is responsible for hydroxylation at C-3 of the indole ring and subsequent formation of the pyrrolidine ring, leadind to protubonine D. Protubonine D is further diacetylated by two acetyltransferases, pboB and pboC, to form the final product protubonine B via protubonine C. The sequence is that of Flavin-dependent monooxygenase pboD from Aspergillus ustus.